The primary structure comprises 338 residues: Phenylalanine--tRNA ligase alpha subunit (338 aa).

Residues 71–101 form a disordered region; the sequence is QFEEKRSSLSQQTSSSDTYQSLPDLTLPGRQ. A compositionally biased stretch (low complexity) spans 78–92; the sequence is SLSQQTSSSDTYQSL. A Mg(2+)-binding site is contributed by Glu253.

The protein belongs to the class-II aminoacyl-tRNA synthetase family. Phe-tRNA synthetase alpha subunit type 1 subfamily. Tetramer of two alpha and two beta subunits. Mg(2+) is required as a cofactor.

Its subcellular location is the cytoplasm. It catalyses the reaction tRNA(Phe) + L-phenylalanine + ATP = L-phenylalanyl-tRNA(Phe) + AMP + diphosphate + H(+). In Desulfotalea psychrophila (strain LSv54 / DSM 12343), this protein is Phenylalanine--tRNA ligase alpha subunit.